Here is a 193-residue protein sequence, read N- to C-terminus: 3-isopropylmalate dehydratase small subunit (193 aa).

This sequence belongs to the LeuD family. LeuD type 1 subfamily. As to quaternary structure, heterodimer of LeuC and LeuD.

It catalyses the reaction (2R,3S)-3-isopropylmalate = (2S)-2-isopropylmalate. Its pathway is amino-acid biosynthesis; L-leucine biosynthesis; L-leucine from 3-methyl-2-oxobutanoate: step 2/4. Its function is as follows. Catalyzes the isomerization between 2-isopropylmalate and 3-isopropylmalate, via the formation of 2-isopropylmaleate. The polypeptide is 3-isopropylmalate dehydratase small subunit (Bacillus anthracis (strain CDC 684 / NRRL 3495)).